The primary structure comprises 198 residues: MKKFLFSLCLLSSTVLASPQSELTERLNQNAGFEAGFTQKVLSPEGDVLMQGEGDVKILRPNLFRWHTQTPDENLLVTDGNTLWYYNPFVEQVTLMGLEKATTQTPFVLLTRNKASDWDNYSVSQNGDAFTVSPKADSAVKSEFIVRIQENGKVTGFSVVEQDGQRSDFDFTKFEAKKPAKNNFTFAIPDGVDIDDQR.

The first 17 residues, Met-1–Ala-17, serve as a signal peptide directing secretion.

The protein belongs to the LolA family. Monomer.

It localises to the periplasm. Its function is as follows. Participates in the translocation of lipoproteins from the inner membrane to the outer membrane. Only forms a complex with a lipoprotein if the residue after the N-terminal Cys is not an aspartate (The Asp acts as a targeting signal to indicate that the lipoprotein should stay in the inner membrane). This Aliivibrio fischeri (strain MJ11) (Vibrio fischeri) protein is Outer-membrane lipoprotein carrier protein.